We begin with the raw amino-acid sequence, 209 residues long: Urease accessory protein UreE (209 aa).

The segment covering 170 to 196 (EHHGHSHSHSHDHDHDHDHDHDHDHQH) has biased composition (basic and acidic residues). The segment at 170 to 209 (EHHGHSHSHSHDHDHDHDHDHDHDHQHGPSCSHGHHHGHR) is disordered.

It belongs to the UreE family.

It localises to the cytoplasm. Functionally, involved in urease metallocenter assembly. Binds nickel. Probably functions as a nickel donor during metallocenter assembly. The sequence is that of Urease accessory protein UreE from Burkholderia mallei (strain NCTC 10247).